The following is a 195-amino-acid chain: Imidazoleglycerol-phosphate dehydratase (195 aa).

This sequence belongs to the imidazoleglycerol-phosphate dehydratase family.

It is found in the cytoplasm. The enzyme catalyses D-erythro-1-(imidazol-4-yl)glycerol 3-phosphate = 3-(imidazol-4-yl)-2-oxopropyl phosphate + H2O. The protein operates within amino-acid biosynthesis; L-histidine biosynthesis; L-histidine from 5-phospho-alpha-D-ribose 1-diphosphate: step 6/9. The sequence is that of Imidazoleglycerol-phosphate dehydratase from Thiobacillus denitrificans (strain ATCC 25259 / T1).